The primary structure comprises 634 residues: DNA-directed RNA polymerase subunit gamma (634 aa).

Positions 74, 76, 89, and 92 each coordinate Zn(2+). Mg(2+)-binding residues include D471, D473, and D475.

This sequence belongs to the RNA polymerase beta' chain family. RpoC1 subfamily. In terms of assembly, in cyanobacteria the RNAP catalytic core is composed of 2 alpha, 1 beta, 1 beta', 1 gamma and 1 omega subunit. When a sigma factor is associated with the core the holoenzyme is formed, which can initiate transcription. Mg(2+) is required as a cofactor. It depends on Zn(2+) as a cofactor.

It carries out the reaction RNA(n) + a ribonucleoside 5'-triphosphate = RNA(n+1) + diphosphate. In terms of biological role, DNA-dependent RNA polymerase catalyzes the transcription of DNA into RNA using the four ribonucleoside triphosphates as substrates. This is DNA-directed RNA polymerase subunit gamma from Prochlorococcus marinus subsp. pastoris (strain CCMP1986 / NIES-2087 / MED4).